A 713-amino-acid polypeptide reads, in one-letter code: G-protein coupled receptor-associated protein LMBRD2 (713 aa).

Residues M1 to G3 lie on the Extracellular side of the membrane. Residues V4–L21 form a helical membrane-spanning segment. Over H22 to K32 the chain is Cytoplasmic. Residues L33–P53 traverse the membrane as a helical segment. The Extracellular segment spans residues L54 to G122. Residues N76 and N89 are each glycosylated (N-linked (GlcNAc...) asparagine). A helical transmembrane segment spans residues I123–M143. At P144–E167 the chain is on the cytoplasmic side. A helical transmembrane segment spans residues N168–V188. Residues N189 to G203 lie on the Extracellular side of the membrane. The helical transmembrane segment at I204 to V224 threads the bilayer. Residues E225–R404 are Cytoplasmic-facing. A coiled-coil region spans residues K246 to N314. A helical transmembrane segment spans residues I405–F425. At S426–Y449 the chain is on the extracellular side. The helical transmembrane segment at V450–F470 threads the bilayer. At R471 to S490 the chain is on the cytoplasmic side. The chain crosses the membrane as a helical span at residues L491–G511. The Extracellular portion of the chain corresponds to L512–V538. A helical membrane pass occupies residues L539–I559. At A560–V713 the chain is on the cytoplasmic side. Residues D587 to Y620 adopt a coiled-coil conformation. A disordered region spans residues K600–V713. Over residues R605–R629 the composition is skewed to basic and acidic residues. Over residues T643–S657 the composition is skewed to polar residues. A compositionally biased stretch (basic and acidic residues) spans N658 to L667. A compositionally biased stretch (polar residues) spans S701–V713.

Belongs to the LIMR family.

It localises to the cell membrane. Its function is as follows. May associate with G-protein coupled receptors and regulate downstream signaling pathways. The sequence is that of G-protein coupled receptor-associated protein LMBRD2 (lmbrd2) from Xenopus laevis (African clawed frog).